The primary structure comprises 98 residues: TTCTSTQQTAAYVTLVSILSDSSFNQCATDSGYSMLTATALPTDAQYKLMCSSTACNTMIKKIVSLNAPNCDLTVPTSGLVLNVYEYANGFSTKCASL.

Disulfide bonds link Cys-3/Cys-71, Cys-27/Cys-56, and Cys-51/Cys-95.

It belongs to the elicitin family.

The protein resides in the secreted. Induces local and distal defense responses (incompatible hypersensitive reaction) in plants from the solanaceae and cruciferae families. Elicits leaf necrosis and causes the accumulation of pathogenesis-related proteins. Might interact with the lipidic molecules of the plasma membrane. The polypeptide is Alpha-elicitin DRE-alpha (Phytophthora drechsleri).